The following is a 99-amino-acid chain: Protein Tat (99 aa).

The tract at residues M1–T20 is disordered. The interval M1 to R24 is interaction with human CREBBP. The interval M1–G48 is transactivation. Zn(2+) contacts are provided by C22, C25, and C27. The cysteine-rich stretch occupies residues C22–C37. N6-acetyllysine; by host PCAF is present on K28. Zn(2+) is bound by residues C30, H33, C34, and C37. The tract at residues F38–G48 is core. The tract at residues G48 to P99 is disordered. The Nuclear localization signal, RNA-binding (TAR), and protein transduction signature appears at R49 to R57. Residues R49–E86 are interaction with the host capping enzyme RNGTT. 2 positions are modified to N6-acetyllysine; by host EP300 and GCN5L2: K50 and K51. Asymmetric dimethylarginine; by host PRMT6 is present on residues R52 and R53. Residue K71 forms a Glycyl lysine isopeptide (Lys-Gly) (interchain with G-Cter in ubiquitin) linkage. The span at K85 to P99 shows a compositional bias: basic and acidic residues.

Belongs to the lentiviruses Tat family. Interacts with host CCNT1. Associates with the P-TEFb complex composed at least of Tat, P-TEFb (CDK9 and CCNT1), TAR RNA, RNA Pol II. Recruits the HATs CREBBP, TAF1/TFIID, EP300, PCAF and GCN5L2. Interacts with host KAT5/Tip60; this interaction targets the latter to degradation. Interacts with the host deacetylase SIRT1. Interacts with host capping enzyme RNGTT; this interaction stimulates RNGTT. Binds to host KDR, and to the host integrins ITGAV/ITGB3 and ITGA5/ITGB1. Interacts with host KPNB1/importin beta-1 without previous binding to KPNA1/importin alpha-1. Interacts with EIF2AK2. Interacts with host nucleosome assembly protein NAP1L1; this interaction may be required for the transport of Tat within the nucleus, since the two proteins interact at the nuclear rim. Interacts with host C1QBP/SF2P32; this interaction involves lysine-acetylated Tat. Interacts with the host chemokine receptors CCR2, CCR3 and CXCR4. Interacts with host DPP4/CD26; this interaction may trigger an anti-proliferative effect. Interacts with host LDLR. Interacts with the host extracellular matrix metalloproteinase MMP1. Interacts with host PRMT6; this interaction mediates Tat's methylation. Interacts with, and is ubiquitinated by MDM2/Hdm2. Interacts with host PSMC3 and HTATIP2. Interacts with STAB1; this interaction may overcome SATB1-mediated repression of IL2 and IL2RA (interleukin) in T cells by binding to the same domain than HDAC1. Interacts (when acetylated) with human CDK13, thereby increasing HIV-1 mRNA splicing and promoting the production of the doubly spliced HIV-1 protein Nef. Interacts with host TBP; this interaction modulates the activity of transcriptional pre-initiation complex. Interacts with host RELA. Interacts with host PLSCR1; this interaction negatively regulates Tat transactivation activity by altering its subcellular distribution. Asymmetrical arginine methylation by host PRMT6 seems to diminish the transactivation capacity of Tat and affects the interaction with host CCNT1. Post-translationally, acetylation by EP300, CREBBP, GCN5L2/GCN5 and PCAF regulates the transactivation activity of Tat. EP300-mediated acetylation of Lys-50 promotes dissociation of Tat from the TAR RNA through the competitive binding to PCAF's bromodomain. In addition, the non-acetylated Tat's N-terminus can also interact with PCAF. PCAF-mediated acetylation of Lys-28 enhances Tat's binding to CCNT1. Lys-50 is deacetylated by SIRT1. In terms of processing, polyubiquitination by host MDM2 does not target Tat to degradation, but activates its transactivation function and fosters interaction with CCNT1 and TAR RNA. Phosphorylated by EIF2AK2 on serine and threonine residues adjacent to the basic region important for TAR RNA binding and function. Phosphorylation of Tat by EIF2AK2 is dependent on the prior activation of EIF2AK2 by dsRNA.

It is found in the host nucleus. The protein localises to the host nucleolus. Its subcellular location is the host cytoplasm. It localises to the secreted. In terms of biological role, transcriptional activator that increases RNA Pol II processivity, thereby increasing the level of full-length viral transcripts. Recognizes a hairpin structure at the 5'-LTR of the nascent viral mRNAs referred to as the transactivation responsive RNA element (TAR) and recruits the cyclin T1-CDK9 complex (P-TEFb complex) that will in turn hyperphosphorylate the RNA polymerase II to allow efficient elongation. The CDK9 component of P-TEFb and other Tat-activated kinases hyperphosphorylate the C-terminus of RNA Pol II that becomes stabilized and much more processive. Other factors such as HTATSF1/Tat-SF1, SUPT5H/SPT5, and HTATIP2 are also important for Tat's function. Besides its effect on RNA Pol II processivity, Tat induces chromatin remodeling of proviral genes by recruiting the histone acetyltransferases (HATs) CREBBP, EP300 and PCAF to the chromatin. This also contributes to the increase in proviral transcription rate, especially when the provirus integrates in transcriptionally silent region of the host genome. To ensure maximal activation of the LTR, Tat mediates nuclear translocation of NF-kappa-B by interacting with host RELA. Through its interaction with host TBP, Tat may also modulate transcription initiation. Tat can reactivate a latently infected cell by penetrating in it and transactivating its LTR promoter. In the cytoplasm, Tat is thought to act as a translational activator of HIV-1 mRNAs. Extracellular circulating Tat can be endocytosed by surrounding uninfected cells via the binding to several surface receptors such as CD26, CXCR4, heparan sulfate proteoglycans (HSPG) or LDLR. Neurons are rarely infected, but they internalize Tat via their LDLR. Through its interaction with nuclear HATs, Tat is potentially able to control the acetylation-dependent cellular gene expression. Modulates the expression of many cellular genes involved in cell survival, proliferation or in coding for cytokines or cytokine receptors. Tat plays a role in T-cell and neurons apoptosis. Tat induced neurotoxicity and apoptosis probably contribute to neuroAIDS. Circulating Tat also acts as a chemokine-like and/or growth factor-like molecule that binds to specific receptors on the surface of the cells, affecting many cellular pathways. In the vascular system, Tat binds to ITGAV/ITGB3 and ITGA5/ITGB1 integrins dimers at the surface of endothelial cells and competes with bFGF for heparin-binding sites, leading to an excess of soluble bFGF. This Homo sapiens (Human) protein is Protein Tat.